A 180-amino-acid polypeptide reads, in one-letter code: Geminin homolog (180 aa).

Over residues 1–27 the composition is skewed to polar residues; the sequence is MSRIGLQQLNNSARNSPFGSEKATGTK. The disordered stretch occupies residues 1 to 29; it reads MSRIGLQQLNNSARNSPFGSEKATGTKQI.

It belongs to the geminin family. In terms of assembly, homodimer. Interacts with cdt-1; the interaction most likely inhibits the ability of cdt-1 to load the mini-chromosome maintenance (MCM) complex onto DNA and therefore reduces DNA replication licensing activity. Interacts with nob-1 and ceh-32.

The protein resides in the cytoplasm. It localises to the nucleus. Functionally, inhibits DNA replication by binding to the DNA replication licensing factor cdt-1. Its interaction with cdt-1 prevents the cdt-1 loading of the mini-chromosome maintenance (MCM) complex onto DNA and therefore DNA replication licencing. The chain is Geminin homolog from Caenorhabditis elegans.